The following is a 304-amino-acid chain: Undecaprenyl-diphosphatase (304 aa).

8 helical membrane-spanning segments follow: residues 5-25 (FLFI…EFVP), 47-67 (GFPE…VVVL), 72-92 (ISSS…LKTS), 111-131 (FGIN…LFHD), 137-157 (LFST…LIVI), 209-231 (ISGL…AMVG), 248-268 (TNWI…LVVI), and 283-303 (FAIY…TKVI).

This sequence belongs to the UppP family.

It localises to the cell membrane. It carries out the reaction di-trans,octa-cis-undecaprenyl diphosphate + H2O = di-trans,octa-cis-undecaprenyl phosphate + phosphate + H(+). Functionally, catalyzes the dephosphorylation of undecaprenyl diphosphate (UPP). Confers resistance to bacitracin. This chain is Undecaprenyl-diphosphatase, found in Clostridium perfringens (strain ATCC 13124 / DSM 756 / JCM 1290 / NCIMB 6125 / NCTC 8237 / Type A).